We begin with the raw amino-acid sequence, 352 residues long: Popeye domain-containing protein 1 (352 aa).

At 1–38 the chain is on the extracellular side; the sequence is MSNTTSALPSSVPAVSLDPNATLCQDWEQSHHLLFHLA. N-linked (GlcNAc...) asparagine glycosylation is found at Asn3 and Asn20. A helical transmembrane segment spans residues 39-59; the sequence is NLSLGLGFLIPTTLALHMIFL. Arg60 is a topological domain (cytoplasmic). A helical membrane pass occupies residues 61–81; that stretch reads LLLMTGCSLFIAWATLYRCTL. Position 82 (Asp82) is a topological domain, extracellular. The helical transmembrane segment at 83-103 threads the bilayer; the sequence is VMVWNVVFLLVNFMHFFFLLY. The Cytoplasmic portion of the chain corresponds to 104-352; that stretch reads KRRPIKIDRE…NVSKTTKKDI (249 aa). Residues 299-352 form a disordered region; sequence ILRGGSTGSSLQKNPLTKTSTTMKPIEEGLEDDVFESESPTTSQNVSKTTKKDI. 2 stretches are compositionally biased toward polar residues: residues 306–321 and 336–346; these read GSSL…STTM and ESPTTSQNVSK.

It belongs to the popeye family. As to expression, expressed in skeletal muscle (at protein level).

Its subcellular location is the lateral cell membrane. The protein resides in the cell junction. It is found in the tight junction. The protein localises to the membrane. It localises to the cell membrane. Its subcellular location is the sarcolemma. The protein resides in the caveola. Its function is as follows. Cell adhesion molecule involved in the establishment and/or maintenance of cell integrity. Involved in skeletal muscle and heart development as well as in the maintenance of heart function. May play a role in vamp3-mediated vesicular transport and recycling of receptor molecules. Involved in the formation and regulation of the tight junction (TJ) paracellular permeability barrier in epithelial cells. May induce primordial adhesive contact and aggregation of epithelial cells in a Ca(2+)-independent manner. May be involved in epithelial movement during corneal sheet formation and regeneration. May play a role in the regulation of cell shape and movement by modulating the Rho-GTPase activity. May also be involved in striated muscle regeneration and in the regulation of cell spreading. The protein is Popeye domain-containing protein 1 (popdc1) of Danio rerio (Zebrafish).